Reading from the N-terminus, the 443-residue chain is Trigger factor (443 aa).

One can recognise a PPIase FKBP-type domain in the interval 168-254; sequence GDFVTIDFEG…IKNLKEKKLP (87 aa).

This sequence belongs to the FKBP-type PPIase family. Tig subfamily.

Its subcellular location is the cytoplasm. The enzyme catalyses [protein]-peptidylproline (omega=180) = [protein]-peptidylproline (omega=0). Functionally, involved in protein export. Acts as a chaperone by maintaining the newly synthesized protein in an open conformation. Functions as a peptidyl-prolyl cis-trans isomerase. This chain is Trigger factor, found in Syntrophus aciditrophicus (strain SB).